A 141-amino-acid polypeptide reads, in one-letter code: Nucleoside diphosphate kinase (141 aa).

Residues Lys-11, Phe-59, Arg-87, Thr-93, Arg-104, and Asn-114 each contribute to the ATP site. Catalysis depends on His-117, which acts as the Pros-phosphohistidine intermediate.

Belongs to the NDK family. Homotetramer. Mg(2+) serves as cofactor.

It localises to the cytoplasm. The enzyme catalyses a 2'-deoxyribonucleoside 5'-diphosphate + ATP = a 2'-deoxyribonucleoside 5'-triphosphate + ADP. The catalysed reaction is a ribonucleoside 5'-diphosphate + ATP = a ribonucleoside 5'-triphosphate + ADP. Its function is as follows. Major role in the synthesis of nucleoside triphosphates other than ATP. The ATP gamma phosphate is transferred to the NDP beta phosphate via a ping-pong mechanism, using a phosphorylated active-site intermediate. This Paraburkholderia phymatum (strain DSM 17167 / CIP 108236 / LMG 21445 / STM815) (Burkholderia phymatum) protein is Nucleoside diphosphate kinase.